The following is a 247-amino-acid chain: (7aS)-7a-methyl-1,5-dioxo-2,3,5,6,7,7a-hexahydro-1H-indene-carboxyl-CoA hydrolase (247 aa).

The protein belongs to the enoyl-CoA hydratase/isomerase family.

The enzyme catalyses (7aS)-7a-methyl-1,5-dioxo-2,3,5,6,7,7a-hexahydro-1H-indene-carboxyl-CoA + H2O = (3E)-2-(2-carboxylatoethyl)-3-methyl-6-oxocyclohex-1-ene-1-carboxyl-CoA + H(+). It participates in steroid metabolism; cholesterol degradation. Involved in the final steps of cholesterol and steroid degradation. Catalyzes the hydrolytic ring D opening of (7aS)-7a-methyl-1,5-dioxo-2,3,5,6,7,7a-hexahydro-1H-indene-carboxyl-CoA (HIEC-CoA) to (3E)-2-(2-carboxylatoethyl)-3-methyl-6-oxocyclohex-1-ene-1-carboxyl-CoA (COCHEA-CoA). This Mycobacterium tuberculosis (strain ATCC 25618 / H37Rv) protein is (7aS)-7a-methyl-1,5-dioxo-2,3,5,6,7,7a-hexahydro-1H-indene-carboxyl-CoA hydrolase.